A 121-amino-acid chain; its full sequence is Protein CHLORORESPIRATORY REDUCTION 42, chloroplastic (121 aa).

Biogenesis factor component of the plastidial NDH subcomplex A.

It localises to the plastid. The protein resides in the chloroplast. The protein localises to the chloroplast stroma. Its function is as follows. Required for both formation and activity of the chloroplast NAD(P)H dehydrogenase (NDH) complex of the photosynthetic electron transport chain. Functions in assembly or stabilization of the NDH complex; probably involved, together with CRR1 and CRR6, in the incorporation of NdhJ, NdhM, NdhK and NdhI into the NDH subcomplex A assembly intermediate (NAI500) to produce the complex NAI400. This chain is Protein CHLORORESPIRATORY REDUCTION 42, chloroplastic, found in Arabidopsis thaliana (Mouse-ear cress).